The primary structure comprises 114 residues: Iron-sulfur cluster insertion protein ErpA (114 aa).

Positions 42, 106, and 108 each coordinate iron-sulfur cluster.

The protein belongs to the HesB/IscA family. As to quaternary structure, homodimer. Iron-sulfur cluster is required as a cofactor.

Required for insertion of 4Fe-4S clusters for at least IspG. The polypeptide is Iron-sulfur cluster insertion protein ErpA (Citrobacter koseri (strain ATCC BAA-895 / CDC 4225-83 / SGSC4696)).